The sequence spans 644 residues: Exoribonuclease 2 (644 aa).

The 328-residue stretch at 189 to 516 folds into the RNB domain; it reads REDLTALDFV…NHRLLKAVIK (328 aa). The region spanning 561-643 is the S1 motif domain; that stretch reads DTRFAAEIVD…ETRSIIARPV (83 aa).

Belongs to the RNR ribonuclease family. RNase II subfamily.

It is found in the cytoplasm. It catalyses the reaction Exonucleolytic cleavage in the 3'- to 5'-direction to yield nucleoside 5'-phosphates.. Its function is as follows. Involved in mRNA degradation. Hydrolyzes single-stranded polyribonucleotides processively in the 3' to 5' direction. The polypeptide is Exoribonuclease 2 (Escherichia coli O45:K1 (strain S88 / ExPEC)).